A 259-amino-acid chain; its full sequence is Small ribosomal subunit protein uS2 (259 aa).

The protein belongs to the universal ribosomal protein uS2 family.

This Streptococcus pneumoniae serotype 2 (strain D39 / NCTC 7466) protein is Small ribosomal subunit protein uS2.